The chain runs to 331 residues: Small ribosomal subunit protein uS2 (331 aa).

The protein belongs to the universal ribosomal protein uS2 family.

The sequence is that of Small ribosomal subunit protein uS2 from Rhodopseudomonas palustris (strain HaA2).